Consider the following 186-residue polypeptide: Imidazoleglycerol-phosphate dehydratase (186 aa).

Belongs to the imidazoleglycerol-phosphate dehydratase family.

It is found in the cytoplasm. It carries out the reaction D-erythro-1-(imidazol-4-yl)glycerol 3-phosphate = 3-(imidazol-4-yl)-2-oxopropyl phosphate + H2O. The protein operates within amino-acid biosynthesis; L-histidine biosynthesis; L-histidine from 5-phospho-alpha-D-ribose 1-diphosphate: step 6/9. The polypeptide is Imidazoleglycerol-phosphate dehydratase (Dictyoglomus thermophilum (strain ATCC 35947 / DSM 3960 / H-6-12)).